Reading from the N-terminus, the 1267-residue chain is BOS complex subunit NOMO2 (1267 aa).

The N-terminal stretch at 1–31 (MLVGQGAGLLGPAVVTAAVVLLLSGVGPAHG) is a signal peptide. Topologically, residues 32 to 1155 (SEDIVVGCGG…NPTRKLPEQD (1124 aa)) are lumenal. Asn50, Asn218, and Asn618 each carry an N-linked (GlcNAc...) asparagine glycan. A helical membrane pass occupies residues 1156 to 1176 (IAQGSYIALPLTLLVLLAGYN). The Cytoplasmic portion of the chain corresponds to 1177-1267 (HDKLIPLLLQ…LETTATCIHY (91 aa)). Positions 1198 to 1219 (GQAASDNSGPEDAKRQAKKQKT) are disordered.

Component of the back of Sec61 (BOS) complex, composed of NCLN/Nicalin, NOMO (NOMO1, NOMO2 or NOMO3) and TMEM147. The BOS complex is part of the multi-pass translocon (MPT) complex, composed of three subcomplexes, the GEL complex (composed of RAB5IF/OPTI and TMCO1), the BOS complex (composed of NCLN/Nicalin, NOMO and TMEM147) and the PAT complex (composed of WDR83OS/Asterix and CCDC47). The MPT complex associates with the SEC61 complex. Due to the strong similarity between NOMO1, NOMO2 and NOMO3, similar interaction pattern probably occur for the three gene copies. Highly expressed in pancreas and skeletal muscle and, at lower levels, in heart.

The protein resides in the endoplasmic reticulum membrane. Its function is as follows. Component of the multi-pass translocon (MPT) complex that mediates insertion of multi-pass membrane proteins into the lipid bilayer of membranes. The MPT complex takes over after the SEC61 complex: following membrane insertion of the first few transmembrane segments of proteins by the SEC61 complex, the MPT complex occludes the lateral gate of the SEC61 complex to promote insertion of subsequent transmembrane regions. This Homo sapiens (Human) protein is BOS complex subunit NOMO2 (NOMO2).